The primary structure comprises 139 residues: Large ribosomal subunit protein bL20 (139 aa).

Belongs to the bacterial ribosomal protein bL20 family.

Binds directly to 23S ribosomal RNA and is necessary for the in vitro assembly process of the 50S ribosomal subunit. It is not involved in the protein synthesizing functions of that subunit. This is Large ribosomal subunit protein bL20 from Leuconostoc mesenteroides subsp. mesenteroides (strain ATCC 8293 / DSM 20343 / BCRC 11652 / CCM 1803 / JCM 6124 / NCDO 523 / NBRC 100496 / NCIMB 8023 / NCTC 12954 / NRRL B-1118 / 37Y).